We begin with the raw amino-acid sequence, 263 residues long: N-acyl homoserine lactonase AttM (263 aa).

7 residues coordinate Zn(2+): H103, H105, D107, H108, H180, D202, and H247.

This sequence belongs to the metallo-beta-lactamase superfamily. The cofactor is Zn(2+).

The enzyme catalyses an N-acyl-L-homoserine lactone + H2O = an N-acyl-L-homoserine + H(+). The sequence is that of N-acyl homoserine lactonase AttM (attM) from Rhizobium radiobacter (Agrobacterium tumefaciens).